Consider the following 193-residue polypeptide: Probable GTP-binding protein EngB (193 aa).

Residues 22–193 (SFPEIVFAGR…LAHFDQYICQ (172 aa)) enclose the EngB-type G domain. GTP is bound by residues 30–37 (GRSNVGKS), 57–61 (GKTRL), 75–78 (DLPG), 142–145 (TKYD), and 172–174 (YSS). Residues serine 37 and threonine 59 each coordinate Mg(2+).

Belongs to the TRAFAC class TrmE-Era-EngA-EngB-Septin-like GTPase superfamily. EngB GTPase family. It depends on Mg(2+) as a cofactor.

Functionally, necessary for normal cell division and for the maintenance of normal septation. In Pelodictyon phaeoclathratiforme (strain DSM 5477 / BU-1), this protein is Probable GTP-binding protein EngB.